Reading from the N-terminus, the 206-residue chain is Small ribosomal subunit protein uS4 (206 aa).

The S4 RNA-binding domain maps to 96 to 156; that stretch reads QRLDNVVYRM…EKAKKQARIV (61 aa).

The protein belongs to the universal ribosomal protein uS4 family. In terms of assembly, part of the 30S ribosomal subunit. Contacts protein S5. The interaction surface between S4 and S5 is involved in control of translational fidelity.

Functionally, one of the primary rRNA binding proteins, it binds directly to 16S rRNA where it nucleates assembly of the body of the 30S subunit. Its function is as follows. With S5 and S12 plays an important role in translational accuracy. This Alteromonas mediterranea (strain DSM 17117 / CIP 110805 / LMG 28347 / Deep ecotype) protein is Small ribosomal subunit protein uS4.